A 319-amino-acid polypeptide reads, in one-letter code: 3-oxoacyl-[acyl-carrier-protein] reductase, chloroplastic (319 aa).

A chloroplast-targeting transit peptide spans 1–57 (MAAAVAAPRLISLKAVAKLGFREISQIRQLAPLHSAIPHFGMLRCRSRQPFSTSVVK). Ala58 carries the post-translational modification N-acetylalanine. Residue 81–105 (ITGASRGIGKAIALALGKAGCKVLV) participates in NADP(+) binding. Ser213 contacts substrate. Tyr226 serves as the catalytic Proton acceptor.

The protein belongs to the short-chain dehydrogenases/reductases (SDR) family. In terms of assembly, homotetramer.

The protein resides in the plastid. The protein localises to the chloroplast. It catalyses the reaction a (3R)-hydroxyacyl-[ACP] + NADP(+) = a 3-oxoacyl-[ACP] + NADPH + H(+). Its pathway is lipid metabolism; fatty acid biosynthesis. The chain is 3-oxoacyl-[acyl-carrier-protein] reductase, chloroplastic from Arabidopsis thaliana (Mouse-ear cress).